The chain runs to 650 residues: Acetyl-coenzyme A synthetase (650 aa).

CoA contacts are provided by residues 191–194 (RGGR), Thr311, and Asn335. ATP-binding positions include 387 to 389 (GEP), 411 to 416 (DTWWQT), Asp500, and Arg515. Position 523 (Ser523) interacts with CoA. Arg526 contributes to the ATP binding site. Val537, His539, and Val542 together coordinate Mg(2+). Arg584 lines the CoA pocket. Lys609 carries the post-translational modification N6-acetyllysine.

Belongs to the ATP-dependent AMP-binding enzyme family. The cofactor is Mg(2+). Post-translationally, acetylated. Deacetylation by the SIR2-homolog deacetylase activates the enzyme.

The enzyme catalyses acetate + ATP + CoA = acetyl-CoA + AMP + diphosphate. Its function is as follows. Catalyzes the conversion of acetate into acetyl-CoA (AcCoA), an essential intermediate at the junction of anabolic and catabolic pathways. AcsA undergoes a two-step reaction. In the first half reaction, AcsA combines acetate with ATP to form acetyl-adenylate (AcAMP) intermediate. In the second half reaction, it can then transfer the acetyl group from AcAMP to the sulfhydryl group of CoA, forming the product AcCoA. This chain is Acetyl-coenzyme A synthetase, found in Shewanella oneidensis (strain ATCC 700550 / JCM 31522 / CIP 106686 / LMG 19005 / NCIMB 14063 / MR-1).